A 96-amino-acid polypeptide reads, in one-letter code: uncharacterized protein (96 aa).

This is an uncharacterized protein from Escherichia coli O157:H7.